Consider the following 106-residue polypeptide: UPF0060 membrane protein Oant_2511 (106 aa).

4 consecutive transmembrane segments (helical) span residues 3-23 (FAIY…FWAW), 30-50 (PLWL…LTLI), 60-80 (AAYG…AEGA), and 84-104 (RWDV…LFAP).

Belongs to the UPF0060 family.

Its subcellular location is the cell inner membrane. The protein is UPF0060 membrane protein Oant_2511 of Brucella anthropi (strain ATCC 49188 / DSM 6882 / CCUG 24695 / JCM 21032 / LMG 3331 / NBRC 15819 / NCTC 12168 / Alc 37) (Ochrobactrum anthropi).